The primary structure comprises 244 residues: Ureidoacrylate amidohydrolase RutB (244 aa).

The active-site Proton acceptor is aspartate 38. The active site involves lysine 147. Catalysis depends on cysteine 180, which acts as the Nucleophile.

Belongs to the isochorismatase family. RutB subfamily.

It carries out the reaction (Z)-3-ureidoacrylate + H2O + H(+) = (Z)-3-aminoacrylate + NH4(+) + CO2. The catalysed reaction is (Z)-3-ureidoacrylate + H2O = (Z)-3-aminoacrylate + carbamate + H(+). It catalyses the reaction (Z)-2-methylureidoacrylate + H2O + H(+) = (Z)-2-methylaminoacrylate + NH4(+) + CO2. In terms of biological role, hydrolyzes ureidoacrylate to form aminoacrylate and carbamate. The carbamate hydrolyzes spontaneously, thereby releasing one of the nitrogen atoms of the pyrimidine ring as ammonia and one of its carbon atoms as CO2. This Escherichia coli O1:K1 / APEC protein is Ureidoacrylate amidohydrolase RutB.